We begin with the raw amino-acid sequence, 205 residues long: MRQKLDRLLEQAQINLTDQQKEQLVGFVRLLDKWNKAYNLTSVRNPDEMLVKHILDSLVVSEHLQGNNFIDVGTGPGLPGIPLAIANPDKQFVLLDSLGKRITFIKNALRELGITNVTPVLSRVEEYKEQTFDGVLSRAFASLNDMVDWCYHLPNPQGKFYALKGIYAESEVQEIKNPIGLEKVIPLSVPELVGERHLVLLNKPN.

S-adenosyl-L-methionine contacts are provided by residues Gly73, Leu78, 124-125 (VE), and Arg138.

This sequence belongs to the methyltransferase superfamily. RNA methyltransferase RsmG family.

The protein localises to the cytoplasm. It carries out the reaction guanosine(527) in 16S rRNA + S-adenosyl-L-methionine = N(7)-methylguanosine(527) in 16S rRNA + S-adenosyl-L-homocysteine. Functionally, specifically methylates the N7 position of guanine in position 527 of 16S rRNA. The protein is Ribosomal RNA small subunit methyltransferase G of Actinobacillus pleuropneumoniae serotype 5b (strain L20).